The following is a 486-amino-acid chain: Odorant receptor coreceptor (486 aa).

The Cytoplasmic segment spans residues 1 to 47; that stretch reads MTTSMQPSKYTGLVADLMPNIRAMKYSGLFMHNFTGGSAFMKKVYSS. A helical transmembrane segment spans residues 48–68; it reads VHLVFLLMQFTFILVNMALNA. The Extracellular segment spans residues 69–75; the sequence is EEVNELS. The chain crosses the membrane as a helical span at residues 76–96; it reads GNTITTLFFTHCITKFIYLAV. At 97 to 135 the chain is on the cytoplasmic side; it reads NQKNFYRTLNIWNQVNTHPLFAESDARYHSIALAKMRKL. The chain crosses the membrane as a helical span at residues 136–156; sequence FFLVMLTTVASATAWTTITFF. Residues 157 to 191 are Extracellular-facing; it reads GDSVKMVVDHETNSSIPVEIPRLPIKSFYPWNASH. 2 N-linked (GlcNAc...) asparagine glycosylation sites follow: N169 and N188. The chain crosses the membrane as a helical span at residues 192 to 212; that stretch reads GMFYMISFAFQIYYVLFSMIH. Over 213–351 the chain is Cytoplasmic; sequence SNLCDVMFCS…VERHKHVVRL (139 aa). The helical transmembrane segment at 352–372 threads the bilayer; the sequence is VAAIGDTYGAALLLHMLTSTI. Topologically, residues 373–390 are extracellular; that stretch reads KLTLLAYQATKINGVNVY. A helical membrane pass occupies residues 391-411; sequence AFTVVGYLGYALAQVFHFCIF. Topologically, residues 412 to 462 are cytoplasmic; the sequence is GNRLIEESSSVMEAAYSCHWYDGSEEAKTFVQIVCQQCQKAMSISGAKFFT. The helical transmembrane segment at 463–483 threads the bilayer; that stretch reads VSLDLFASVLGAVVTYFMVLV. Topologically, residues 484-486 are extracellular; that stretch reads QLK.

The protein belongs to the insect chemoreceptor superfamily. Heteromeric odorant receptor channel (TC 1.A.69) family. Orco subfamily. Heterodimer with conventional odorant receptors (ORs). Complexes exist early in the endomembrane system in olfactory sensory neurons (OSNs), coupling these complexes to the conserved ciliary trafficking pathway. Expression is restricted to olfactory sensory neurons (OSNs). Coexpressed with Snmp in a lateral-distal population of OSNs. Expressed in the embryonic antennal-maxillary complex, in all 21 OSNs of the larval dorsal organ, in the pupal antennal OSNs, in all 120 adult maxillary palp neurons and in approximately 70-80% of adult antennal OSNs, where expression is highest at the dorsal-medial edge. Localized to OSN cell bodies and to the distal portion of ciliated OSN dendrites.

The protein resides in the cell membrane. Odorant coreceptor which complexes with conventional odorant receptors (ORs) to form odorant-sensing units, providing sensitive and prolonged odorant signaling and calcium permeability. Orco is a universal and integral part of the functional odorant receptor, involved in the dendritic localization of other olfactory receptors. Expression of Orco alone leads to formation of rapid and transient ion channels not directly responding to odorants, but directly activated by intracellular cAMP or cGMP. Snmp, Or67d and lush act in concert to capture fatty-acid-derived male pheromone 11-cis vaccenyl acetate (cVA) molecules on the surface of Or67d expressing olfactory dendrites and facilitate their transfer to the odorant-receptor Orco complex. This is Odorant receptor coreceptor (Orco) from Drosophila melanogaster (Fruit fly).